The sequence spans 424 residues: UPF0229 protein PC1_1960 (424 aa).

Positions 46–109 (IESGESVSIP…GQGDASKDGE (64 aa)) are disordered. The segment covering 77–90 (PGNDHFVQNDKIER) has biased composition (basic and acidic residues). Residues 92-101 (QGGGGGGSGQ) show a composition bias toward gly residues.

The protein belongs to the UPF0229 family.

This chain is UPF0229 protein PC1_1960, found in Pectobacterium carotovorum subsp. carotovorum (strain PC1).